The sequence spans 201 residues: Adapter protein MecA 1 (201 aa).

This sequence belongs to the MecA family. As to quaternary structure, homodimer.

Enables the recognition and targeting of unfolded and aggregated proteins to the ClpC protease or to other proteins involved in proteolysis. Acts negatively in the development of competence by binding ComK and recruiting it to the ClpCP protease. When overexpressed, inhibits sporulation. Also involved in Spx degradation by ClpC. The polypeptide is Adapter protein MecA 1 (mecA1) (Halalkalibacterium halodurans (strain ATCC BAA-125 / DSM 18197 / FERM 7344 / JCM 9153 / C-125) (Bacillus halodurans)).